Here is a 197-residue protein sequence, read N- to C-terminus: ATP-dependent Clp protease proteolytic subunit (197 aa).

The Nucleophile role is filled by serine 98. The active site involves histidine 123.

Belongs to the peptidase S14 family. In terms of assembly, fourteen ClpP subunits assemble into 2 heptameric rings which stack back to back to give a disk-like structure with a central cavity, resembling the structure of eukaryotic proteasomes.

The protein localises to the cytoplasm. The enzyme catalyses Hydrolysis of proteins to small peptides in the presence of ATP and magnesium. alpha-casein is the usual test substrate. In the absence of ATP, only oligopeptides shorter than five residues are hydrolyzed (such as succinyl-Leu-Tyr-|-NHMec, and Leu-Tyr-Leu-|-Tyr-Trp, in which cleavage of the -Tyr-|-Leu- and -Tyr-|-Trp bonds also occurs).. In terms of biological role, cleaves peptides in various proteins in a process that requires ATP hydrolysis. Has a chymotrypsin-like activity. Plays a major role in the degradation of misfolded proteins. The protein is ATP-dependent Clp protease proteolytic subunit of Haemophilus ducreyi (strain 35000HP / ATCC 700724).